A 418-amino-acid chain; its full sequence is Tyrosine--tRNA ligase (418 aa).

Tyr-34 serves as a coordination point for L-tyrosine. The 'HIGH' region signature appears at 39–48 (PTADSLHLGH). L-tyrosine-binding residues include Tyr-169 and Gln-173. Positions 229–233 (KFGKS) match the 'KMSKS' region motif. Lys-232 provides a ligand contact to ATP. The region spanning 352 to 418 (LNLVDMLVTA…GKKKYAVLTY (67 aa)) is the S4 RNA-binding domain.

It belongs to the class-I aminoacyl-tRNA synthetase family. TyrS type 1 subfamily. In terms of assembly, homodimer.

It localises to the cytoplasm. It catalyses the reaction tRNA(Tyr) + L-tyrosine + ATP = L-tyrosyl-tRNA(Tyr) + AMP + diphosphate + H(+). Catalyzes the attachment of tyrosine to tRNA(Tyr) in a two-step reaction: tyrosine is first activated by ATP to form Tyr-AMP and then transferred to the acceptor end of tRNA(Tyr). The sequence is that of Tyrosine--tRNA ligase from Streptococcus pyogenes serotype M5 (strain Manfredo).